The primary structure comprises 394 residues: Elongation factor Tu (394 aa).

In terms of domain architecture, tr-type G spans 10–205 (KPHVNIGTIG…VDTWIPLPPR (196 aa)). A G1 region spans residues 19–26 (GHVDHGKT). A GTP-binding site is contributed by 19-26 (GHVDHGKT). Position 26 (Thr26) interacts with Mg(2+). A G2 region spans residues 60–64 (GITIN). Positions 81 to 84 (DCPG) are G3. GTP is bound by residues 81–85 (DCPGH) and 136–139 (NKCD). The G4 stretch occupies residues 136–139 (NKCD). Residues 174-176 (SAL) form a G5 region.

It belongs to the TRAFAC class translation factor GTPase superfamily. Classic translation factor GTPase family. EF-Tu/EF-1A subfamily. Monomer.

It is found in the cytoplasm. It catalyses the reaction GTP + H2O = GDP + phosphate + H(+). Functionally, GTP hydrolase that promotes the GTP-dependent binding of aminoacyl-tRNA to the A-site of ribosomes during protein biosynthesis. In Bacteroides fragilis (strain ATCC 25285 / DSM 2151 / CCUG 4856 / JCM 11019 / LMG 10263 / NCTC 9343 / Onslow / VPI 2553 / EN-2), this protein is Elongation factor Tu.